We begin with the raw amino-acid sequence, 283 residues long: Acetylglutamate kinase (283 aa).

Substrate is bound by residues 63 to 64 (GG), R85, and N178.

It belongs to the acetylglutamate kinase family. ArgB subfamily.

It localises to the cytoplasm. The catalysed reaction is N-acetyl-L-glutamate + ATP = N-acetyl-L-glutamyl 5-phosphate + ADP. The protein operates within amino-acid biosynthesis; L-arginine biosynthesis; N(2)-acetyl-L-ornithine from L-glutamate: step 2/4. Its function is as follows. Catalyzes the ATP-dependent phosphorylation of N-acetyl-L-glutamate. This Prochlorococcus marinus (strain MIT 9312) protein is Acetylglutamate kinase.